Reading from the N-terminus, the 397-residue chain is Acetate kinase (397 aa).

A Mg(2+)-binding site is contributed by Asn7. Lys14 lines the ATP pocket. Residue Arg90 participates in substrate binding. Residue Asp147 is the Proton donor/acceptor of the active site. Residues 207-211 (HLGNG), 282-284 (DFR), and 330-334 (GIGEN) contribute to the ATP site. Mg(2+) is bound at residue Glu384.

The protein belongs to the acetokinase family. Homodimer. Requires Mg(2+) as cofactor. Mn(2+) is required as a cofactor.

The protein localises to the cytoplasm. The enzyme catalyses acetate + ATP = acetyl phosphate + ADP. Its pathway is metabolic intermediate biosynthesis; acetyl-CoA biosynthesis; acetyl-CoA from acetate: step 1/2. Its function is as follows. Catalyzes the formation of acetyl phosphate from acetate and ATP. Can also catalyze the reverse reaction. The sequence is that of Acetate kinase from Agathobacter rectalis (strain ATCC 33656 / DSM 3377 / JCM 17463 / KCTC 5835 / VPI 0990) (Eubacterium rectale).